Here is a 101-residue protein sequence, read N- to C-terminus: NAD(P)H-quinone oxidoreductase subunit 4L, chloroplastic (101 aa).

A run of 3 helical transmembrane segments spans residues 2–22 (LLEH…YGLI), 32–52 (MCLE…SDFF), and 61–81 (IFSI…SAIV).

This sequence belongs to the complex I subunit 4L family. As to quaternary structure, NDH is composed of at least 16 different subunits, 5 of which are encoded in the nucleus.

The protein localises to the plastid. The protein resides in the chloroplast thylakoid membrane. It catalyses the reaction a plastoquinone + NADH + (n+1) H(+)(in) = a plastoquinol + NAD(+) + n H(+)(out). The catalysed reaction is a plastoquinone + NADPH + (n+1) H(+)(in) = a plastoquinol + NADP(+) + n H(+)(out). NDH shuttles electrons from NAD(P)H:plastoquinone, via FMN and iron-sulfur (Fe-S) centers, to quinones in the photosynthetic chain and possibly in a chloroplast respiratory chain. The immediate electron acceptor for the enzyme in this species is believed to be plastoquinone. Couples the redox reaction to proton translocation, and thus conserves the redox energy in a proton gradient. This Carica papaya (Papaya) protein is NAD(P)H-quinone oxidoreductase subunit 4L, chloroplastic.